Here is a 434-residue protein sequence, read N- to C-terminus: Nicotinate phosphoribosyltransferase (434 aa).

Histidine 242 bears the Phosphohistidine; by autocatalysis mark.

Belongs to the NAPRTase family. Post-translationally, transiently phosphorylated on a His residue during the reaction cycle. Phosphorylation strongly increases the affinity for substrates and increases the rate of nicotinate D-ribonucleotide production. Dephosphorylation regenerates the low-affinity form of the enzyme, leading to product release.

The catalysed reaction is nicotinate + 5-phospho-alpha-D-ribose 1-diphosphate + ATP + H2O = nicotinate beta-D-ribonucleotide + ADP + phosphate + diphosphate. It participates in cofactor biosynthesis; NAD(+) biosynthesis; nicotinate D-ribonucleotide from nicotinate: step 1/1. Functionally, catalyzes the synthesis of beta-nicotinate D-ribonucleotide from nicotinate and 5-phospho-D-ribose 1-phosphate at the expense of ATP. The chain is Nicotinate phosphoribosyltransferase from Brucella canis (strain ATCC 23365 / NCTC 10854 / RM-666).